Reading from the N-terminus, the 170-residue chain is Large ribosomal subunit protein uL10 (170 aa).

It belongs to the universal ribosomal protein uL10 family. As to quaternary structure, part of the ribosomal stalk of the 50S ribosomal subunit. The N-terminus interacts with L11 and the large rRNA to form the base of the stalk. The C-terminus forms an elongated spine to which L12 dimers bind in a sequential fashion forming a multimeric L10(L12)X complex.

Its function is as follows. Forms part of the ribosomal stalk, playing a central role in the interaction of the ribosome with GTP-bound translation factors. The protein is Large ribosomal subunit protein uL10 of Nitratiruptor sp. (strain SB155-2).